Reading from the N-terminus, the 278-residue chain is Transmembrane protein 41B (278 aa).

The tract at residues 1–31 is disordered; sequence MQVHERSHTGGHTFQCNHGNEKKAPAAGKVH. 6 helical membrane passes run 39-59, 96-116, 142-162, 184-204, 212-232, and 249-269; these read MSLL…FLVY, FYVE…TFAI, CSGL…RPVV, LINY…FINI, PLKV…FVAI, and SWNS…PAIF. Positions 127–238 are VTT domain; required for its function in autophagy; it reads GFLYPFPLAL…FVAIKAGTTL (112 aa).

It belongs to the TMEM41 family.

The protein resides in the endoplasmic reticulum membrane. It is found in the endomembrane system. The enzyme catalyses a 1,2-diacyl-sn-glycero-3-phospho-L-serine(in) = a 1,2-diacyl-sn-glycero-3-phospho-L-serine(out). It catalyses the reaction cholesterol(in) = cholesterol(out). The catalysed reaction is a 1,2-diacyl-sn-glycero-3-phosphocholine(in) = a 1,2-diacyl-sn-glycero-3-phosphocholine(out). It carries out the reaction a 1,2-diacyl-sn-glycero-3-phosphoethanolamine(in) = a 1,2-diacyl-sn-glycero-3-phosphoethanolamine(out). Its function is as follows. Phospholipid scramblase involved in lipid homeostasis and membrane dynamics processes. Has phospholipid scramblase activity toward cholesterol and phosphatidylserine, as well as phosphatidylethanolamine and phosphatidylcholine. Required for autophagosome formation: participates in early stages of autophagosome biogenesis at the endoplasmic reticulum (ER) membrane by reequilibrating the leaflets of the ER as lipids are extracted by atg2 (atg2a or atg2b) to mediate autophagosome assembly. In addition to autophagy, involved in other processes in which phospholipid scramblase activity is required. Required for normal motor neuron development. This is Transmembrane protein 41B from Xenopus laevis (African clawed frog).